The following is a 144-amino-acid chain: Arsenate reductase ArsI1 (144 aa).

The active-site Nucleophile; cysteine thioarsenate intermediate is the Cys-14.

Belongs to the ArsC family.

It carries out the reaction [glutaredoxin]-dithiol + arsenate + glutathione + H(+) = glutathionyl-S-S-[glutaredoxin] + arsenite + H2O. Functionally, catalyzes the reduction of arsenate [As(V)] to arsenite [As(III)]. Does not constitute the major arsenate reductase in cells: essential only in the absence of ArsC (AC P74313). This chain is Arsenate reductase ArsI1, found in Synechocystis sp. (strain ATCC 27184 / PCC 6803 / Kazusa).